The chain runs to 237 residues: Synapse differentiation-inducing gene protein 1-like (237 aa).

3 disordered regions span residues 1–23, 84–111, and 127–148; these read MESL…HRPY, AGSC…PGQA, and ELQG…ESEC. Residues 1–161 are Extracellular-facing; it reads MESLSELQNP…FLTLPPRDHL (161 aa). Residues 129-148 show a composition bias toward acidic residues; it reads QGQEDSQEEESDGTSSESEC. The helical transmembrane segment at 162–182 threads the bilayer; it reads GLTLFSMLCCFWPLGIAAFYF. At 183–204 the chain is on the cytoplasmic side; sequence SQGTSKAISKGDFRLASTTSRR. A helical transmembrane segment spans residues 205-225; the sequence is ALFLATLSIAVGAGLYVAVVV. Residues 226-237 lie on the Extracellular side of the membrane; it reads ALAAYMSQNGHG.

Belongs to the CD225/Dispanin family. Expression is restricted to the caudate-putamen. Down-regulated in R6/2 transgenic mice, a model for Huntington disease.

Its subcellular location is the membrane. It is found in the golgi apparatus. The protein localises to the cis-Golgi network. In Mus musculus (Mouse), this protein is Synapse differentiation-inducing gene protein 1-like (Syndig1l).